Here is a 504-residue protein sequence, read N- to C-terminus: Kinesin light chain 3 (504 aa).

The stretch at 90–150 forms a coiled coil; it reads ALSAHVGALE…EEEKRHLEFL (61 aa). The segment at 153–197 is disordered; the sequence is LRQYDPPAESQQSESPPRRDSLASLFPSEEEERKGPEAAGAAAAQ. A compositionally biased stretch (low complexity) spans 158–167; that stretch reads PPAESQQSES. Ser-173 bears the Phosphoserine mark. TPR repeat units follow at residues 207 to 240, 249 to 282, 291 to 324, 333 to 366, and 375 to 408; these read LRTLHNLVIQYAGQGRYEVAVPLCRQALEDLERS, ATMLNILALVYRDQNKYKEATDLLHDALQIREQT, AATLNNLAVLYGKRGRYREAEPLCQRALEIREKV, AKQLNNLALLCQNQGKFEDVERHYARALSIYEAL, and AKTKNNLASAYLKQNKYQQAEELYKEILHKEDLP. A disordered region spans residues 411–438; it reads LGAPNTGTAGDAEQALRRSSSLSKIRES. The residue at position 466 (Ser-466) is a Phosphoserine. At Thr-498 the chain carries Phosphothreonine. Residue Ser-502 is modified to Phosphoserine.

It belongs to the kinesin light chain family. In terms of assembly, oligomer composed of two heavy chains and two light chains. Associates with microtubulin in an ATP-dependent manner. Interacts with KIF5C. Interacts with ODF1. Interacts with LRGUK. Interacts with VDAC2.

The protein resides in the cytoplasm. The protein localises to the cytoskeleton. It localises to the mitochondrion. In terms of biological role, kinesin is a microtubule-associated force-producing protein that may play a role in organelle transport. Plays a role during spermiogenesis in the development of the sperm tail midpiece and in the normal function of spermatozoa. May play a role in the formation of the mitochondrial sheath formation in the developing spermatid midpiece. The polypeptide is Kinesin light chain 3 (KLC3) (Pongo abelii (Sumatran orangutan)).